The sequence spans 425 residues: E3 ubiquitin-protein ligase CBLL2 (425 aa).

The segment at 57-97 (CDKCDLPIKIYGRIIPCKHAFCYHCANLYDKVGYKVCPRCR) adopts an RING-type zinc-finger fold. Residues 96–154 (CRYPVLRIEAHKRGSVFMCSIVQQCKRTYLSQKSLQAHIKRRHKRARKQVTSASLEKVR) form an HYB domain region. The segment at 112–138 (FMCSIVQQCKRTYLSQKSLQAHIKRRH) adopts a C2H2-type zinc-finger fold. Disordered stretches follow at residues 241–297 (DHIQ…HQMP) and 382–425 (TDAM…HRRY). Residues 398–408 (PCPPTRSPPPS) are compositionally biased toward pro residues. Over residues 412 to 425 (GRSHHSHQRRHRRY) the composition is skewed to basic residues.

As to quaternary structure, homodimer. In terms of tissue distribution, exclusively expressed in testis and sperm, including spermatocytes, round and elongated spermatids, and Leydig cells.

It localises to the cytoplasm. The enzyme catalyses S-ubiquitinyl-[E2 ubiquitin-conjugating enzyme]-L-cysteine + [acceptor protein]-L-lysine = [E2 ubiquitin-conjugating enzyme]-L-cysteine + N(6)-ubiquitinyl-[acceptor protein]-L-lysine.. The protein operates within protein modification; protein ubiquitination. In terms of biological role, E3 ubiquitin ligase catalyzing the covalent attachment of ubiquitin moieties onto substrate proteins. May operate on tyrosine-phosphorylated SRC substrates. The sequence is that of E3 ubiquitin-protein ligase CBLL2 from Homo sapiens (Human).